A 438-amino-acid chain; its full sequence is Na(+)/H(+) antiporter NhaA 2 (438 aa).

The next 11 helical transmembrane spans lie at 21 to 41 (SGGI…NSPW), 66 to 86 (LHHW…GLEL), 102 to 122 (MLPI…FHFI), 130 to 150 (KGWG…LALL), 160 to 180 (IFLT…IALF), 183 to 203 (GELA…LIAG), 206 to 226 (LGVQ…VVLL), 308 to 328 (WVIF…VLQL), 341 to 361 (LGVA…FSWI), 376 to 396 (WMDV…SLFI), and 410 to 430 (AKLG…TVLS).

It belongs to the NhaA Na(+)/H(+) (TC 2.A.33) antiporter family.

It localises to the cell inner membrane. The catalysed reaction is Na(+)(in) + 2 H(+)(out) = Na(+)(out) + 2 H(+)(in). In terms of biological role, na(+)/H(+) antiporter that extrudes sodium in exchange for external protons. The polypeptide is Na(+)/H(+) antiporter NhaA 2 (Syntrophotalea carbinolica (strain DSM 2380 / NBRC 103641 / GraBd1) (Pelobacter carbinolicus)).